The sequence spans 338 residues: Malate dehydrogenase, mitochondrial (338 aa).

The N-terminal 24 residues, 1 to 24 (MLSALARPVGAALRRSFSTSAQNN), are a transit peptide targeting the mitochondrion. NAD(+)-binding positions include 31–37 (GASGGIG) and aspartate 57. A glycan (O-linked (GlcNAc) serine) is linked at serine 33. Residues lysine 78 and lysine 91 each carry the N6-acetyllysine; alternate modification. An N6-succinyllysine; alternate mark is found at lysine 78 and lysine 91. Substrate is bound by residues arginine 104 and arginine 110. NAD(+) is bound by residues asparagine 117 and 140-142 (ISN). Asparagine 142 is a binding site for substrate. Lysine 165 is subject to N6-acetyllysine. A substrate-binding site is contributed by arginine 176. Lysine 185 carries the N6-acetyllysine; alternate modification. At lysine 185 the chain carries N6-succinyllysine; alternate. Histidine 200 serves as the catalytic Proton acceptor. The residue at position 203 (lysine 203) is an N6-succinyllysine. N6-acetyllysine; alternate is present on residues lysine 215 and lysine 239. An N6-succinyllysine; alternate mark is found at lysine 215 and lysine 239. Lysine 239 is subject to N6-malonyllysine; alternate. Serine 246 is modified (phosphoserine). An NAD(+)-binding site is contributed by methionine 251. An N6-succinyllysine modification is found at lysine 269. Lysine 296, lysine 301, lysine 307, lysine 314, and lysine 324 each carry N6-acetyllysine; alternate. 5 positions are modified to N6-succinyllysine; alternate: lysine 296, lysine 301, lysine 307, lysine 314, and lysine 324. An N6-malonyllysine; alternate modification is found at lysine 307. Residue serine 326 is modified to Phosphoserine. N6-acetyllysine; alternate occurs at positions 328, 329, and 335. Residue lysine 328 is modified to N6-succinyllysine; alternate. Position 329 is an N6-malonyllysine; alternate (lysine 329). Lysine 335 is subject to N6-succinyllysine; alternate.

The protein belongs to the LDH/MDH superfamily. MDH type 1 family. In terms of assembly, homodimer. In terms of processing, acetylation is enhanced after treatment either with trichostin A (TCA) or with nicotinamide (NAM) with the appearance of tri- and tetraacetylations. Glucose also increases acetylation. As to expression, expressed in flagella of epididymal sperm.

The protein localises to the mitochondrion matrix. The catalysed reaction is (S)-malate + NAD(+) = oxaloacetate + NADH + H(+). Enzyme activity is enhanced by acetylation. The polypeptide is Malate dehydrogenase, mitochondrial (Mdh2) (Rattus norvegicus (Rat)).